The sequence spans 306 residues: SPbeta prophage-derived uncharacterized protein YonG (306 aa).

The chain is SPbeta prophage-derived uncharacterized protein YonG (yonG) from Bacillus subtilis (strain 168).